The sequence spans 414 residues: Tyrosine--tRNA ligase (414 aa).

L-tyrosine is bound at residue Tyr-38. The 'HIGH' region motif lies at 43 to 52 (PTAISLHLGN). The L-tyrosine site is built by Tyr-165 and Gln-169. Residues 227–231 (KIGKS) carry the 'KMSKS' region motif. Residue Lys-230 participates in ATP binding. In terms of domain architecture, S4 RNA-binding spans 349–413 (DDLFLTLVDS…KGKKQYWVIY (65 aa)).

The protein belongs to the class-I aminoacyl-tRNA synthetase family. TyrS type 1 subfamily. As to quaternary structure, homodimer.

The protein resides in the cytoplasm. The enzyme catalyses tRNA(Tyr) + L-tyrosine + ATP = L-tyrosyl-tRNA(Tyr) + AMP + diphosphate + H(+). Its function is as follows. Catalyzes the attachment of tyrosine to tRNA(Tyr) in a two-step reaction: tyrosine is first activated by ATP to form Tyr-AMP and then transferred to the acceptor end of tRNA(Tyr). The polypeptide is Tyrosine--tRNA ligase (Mycoplasmopsis pulmonis (strain UAB CTIP) (Mycoplasma pulmonis)).